The chain runs to 237 residues: Ubiquinone biosynthesis O-methyltransferase (237 aa).

Residues Arg-38, Gly-58, Asp-79, and Met-124 each contribute to the S-adenosyl-L-methionine site.

Belongs to the methyltransferase superfamily. UbiG/COQ3 family.

It carries out the reaction a 3-demethylubiquinol + S-adenosyl-L-methionine = a ubiquinol + S-adenosyl-L-homocysteine + H(+). The catalysed reaction is a 3-(all-trans-polyprenyl)benzene-1,2-diol + S-adenosyl-L-methionine = a 2-methoxy-6-(all-trans-polyprenyl)phenol + S-adenosyl-L-homocysteine + H(+). It functions in the pathway cofactor biosynthesis; ubiquinone biosynthesis. In terms of biological role, O-methyltransferase that catalyzes the 2 O-methylation steps in the ubiquinone biosynthetic pathway. This is Ubiquinone biosynthesis O-methyltransferase from Acinetobacter baumannii (strain ACICU).